The primary structure comprises 930 residues: G patch domain-containing protein TGH (930 aa).

K25 participates in a covalent cross-link: Glycyl lysine isopeptide (Lys-Gly) (interchain with G-Cter in ubiquitin). A disordered region spans residues G76–D152. The region spanning S159–Y199 is the G-patch domain. The stretch at L405–A447 is one SURP motif repeat. Disordered regions lie at residues A478–Q508, R687–A751, and F773–D930. Positions P489–D498 are enriched in basic and acidic residues. The segment covering T499 to Q508 has biased composition (polar residues). Residues I701 to E711 show a composition bias toward acidic residues. Over residues E779–T808 the composition is skewed to basic and acidic residues. The span at R848–R857 shows a compositional bias: basic residues. Over residues H858–G877 the composition is skewed to basic and acidic residues. The span at R892–S908 shows a compositional bias: basic residues. The span at S913 to R923 shows a compositional bias: basic and acidic residues.

Expressed in vasculature of cotyledons and leaves, young meristematic tissues, trichomes and pistils.

It localises to the nucleus speckle. The protein resides in the nucleus. The protein localises to the nucleoplasm. Its function is as follows. Functions as a component of microRNA (miRNA) and small interfering RNA (siRNA) biogenesis. May assist DCL1 and DCL4 to efficiently process and/or recruit the precursors of miRNAs and siRNAs. In the miRNA biogenesis pathway, associates with the DCL1 complex that processes primary miRNAs (pri-miRNAs) into miRNAs. Binds pri-miRNAs and precursor miRNAs (pre-miRNAs). Is required for the interaction between pri-miRNAs and DRB1. Required for general proper plant growth and, in particular, initiation of vascular development. Interacts genetically with AMP1, a glutamate carboxypeptidase involved in the regulation of meristem function. The chain is G patch domain-containing protein TGH from Arabidopsis thaliana (Mouse-ear cress).